Here is a 138-residue protein sequence, read N- to C-terminus: Large ribosomal subunit protein uL16c (138 aa).

This sequence belongs to the universal ribosomal protein uL16 family. As to quaternary structure, part of the 50S ribosomal subunit.

It localises to the plastid. The protein resides in the chloroplast. The protein is Large ribosomal subunit protein uL16c of Physcomitrium patens (Spreading-leaved earth moss).